The following is a 230-amino-acid chain: Large ribosomal subunit protein uL1 (230 aa).

The protein belongs to the universal ribosomal protein uL1 family. Part of the 50S ribosomal subunit.

Binds directly to 23S rRNA. The L1 stalk is quite mobile in the ribosome, and is involved in E site tRNA release. In terms of biological role, protein L1 is also a translational repressor protein, it controls the translation of the L11 operon by binding to its mRNA. The protein is Large ribosomal subunit protein uL1 of Caldicellulosiruptor bescii (strain ATCC BAA-1888 / DSM 6725 / KCTC 15123 / Z-1320) (Anaerocellum thermophilum).